We begin with the raw amino-acid sequence, 80 residues long: SPI-1 type 3 secretion system needle filament protein (80 aa).

Belongs to the SctF family. The core secretion machinery of the T3SS is composed of approximately 20 different proteins, including cytoplasmic components, a base, an export apparatus and a needle. This subunit polymerizes and forms the helical needle filament. Interacts with the needle tip protein SipD/SctA. Interacts with the needle adapter protein PrgJ/SctI, the secretin InvG/SctC and the minor export apparatus protein SpaP/SctR. In vitro, the needle protomer refolds spontaneously to extend the needle from the distal end.

It localises to the secreted. The protein resides in the cell surface. Its activity is regulated as follows. Binding of bile salts, including deoxycholate, to the PrgI:SipD interface may inhibit the T3SS function. In terms of biological role, component of the type III secretion system (T3SS), also called injectisome, which is used to inject bacterial effector proteins into eukaryotic host cells. PrgI/SctF1 forms the external needle filament that protrudes from the bacterial surface. Is probably involved in the transduction of an activating signal, thought to be mediated by the distal tip of the needle filament, to the secretion machine. Required for invasion of epithelial cells. Required for the secretion of the effector protein SptP. During infection, can induce innate immune responses. The needle proteins interact with host TLR2 or TLR4, and induce signaling by NF-kappa-B and/or AP-1. This activation is MyD88 dependent and results in increased expression of cytokines, including TNF-alpha, IL-6 and IL-8. In Salmonella typhimurium (strain LT2 / SGSC1412 / ATCC 700720), this protein is SPI-1 type 3 secretion system needle filament protein.